The sequence spans 349 residues: Desmethyl-yatein O-methyltransferase (349 aa).

S-adenosyl-L-homocysteine contacts are provided by Gly193, Asp216, Asp236, Met237, Met249, and Lys250. His254 (proton acceptor) is an active-site residue. Active-site residues include Glu282 and Glu314.

It belongs to the class I-like SAM-binding methyltransferase superfamily. Cation-independent O-methyltransferase family. COMT subfamily. Homodimer. In terms of tissue distribution, mostly expressed in stems, and, to a lower extent, in leaves.

The catalysed reaction is (-)-5'-demethylyatein + S-adenosyl-L-methionine = (-)-yatein + S-adenosyl-L-homocysteine + H(+). It participates in aromatic compound metabolism; phenylpropanoid biosynthesis. Its function is as follows. O-methyltransferase involved in the biosynthesis of etoposide, a chemotherapeutic compound of the topoisomerase inhibitor family. Catalyzes the methylation of (-)-5'-demethylyatein to produce (-)-yatein. In Sinopodophyllum hexandrum (Himalayan may apple), this protein is Desmethyl-yatein O-methyltransferase.